The following is a 429-amino-acid chain: Serine--tRNA ligase (429 aa).

Residue 235-237 coordinates L-serine; the sequence is TAE. 266-268 is an ATP binding site; that stretch reads RSE. Glu-289 serves as a coordination point for L-serine. 353–356 is a binding site for ATP; it reads EISS. Ser-389 provides a ligand contact to L-serine.

This sequence belongs to the class-II aminoacyl-tRNA synthetase family. Type-1 seryl-tRNA synthetase subfamily. As to quaternary structure, homodimer. The tRNA molecule binds across the dimer.

Its subcellular location is the cytoplasm. The enzyme catalyses tRNA(Ser) + L-serine + ATP = L-seryl-tRNA(Ser) + AMP + diphosphate + H(+). The catalysed reaction is tRNA(Sec) + L-serine + ATP = L-seryl-tRNA(Sec) + AMP + diphosphate + H(+). Its pathway is aminoacyl-tRNA biosynthesis; selenocysteinyl-tRNA(Sec) biosynthesis; L-seryl-tRNA(Sec) from L-serine and tRNA(Sec): step 1/1. Its function is as follows. Catalyzes the attachment of serine to tRNA(Ser). Is also able to aminoacylate tRNA(Sec) with serine, to form the misacylated tRNA L-seryl-tRNA(Sec), which will be further converted into selenocysteinyl-tRNA(Sec). This is Serine--tRNA ligase from Haemophilus influenzae (strain 86-028NP).